The following is a 61-amino-acid chain: Metallothionein-2 (61 aa).

N-acetylmethionine is present on M1. The beta stretch occupies residues 1–29 (MDPNCSCAAGDSCTCAGSCKCKECKCTSC). Residues C5, C7, C13, C15, C19, C21, C24, C26, C29, C33, C34, C36, C37, C41, C44, C48, C50, and C57 each coordinate a divalent metal cation. The segment at 30–61 (KKSCCSCCPVGCAKCAQGCICKGASDKCSCCA) is alpha. S58 carries the phosphoserine modification. A divalent metal cation-binding residues include C59 and C60.

This sequence belongs to the metallothionein superfamily. Type 1 family. Interacts with EOLA1.

In terms of biological role, metallothioneins have a high content of cysteine residues that bind various heavy metals; these proteins are transcriptionally regulated by both heavy metals and glucocorticoids. This chain is Metallothionein-2, found in Homo sapiens (Human).